We begin with the raw amino-acid sequence, 205 residues long: Large ribosomal subunit protein uL4 (205 aa).

It belongs to the universal ribosomal protein uL4 family. As to quaternary structure, part of the 50S ribosomal subunit.

Functionally, one of the primary rRNA binding proteins, this protein initially binds near the 5'-end of the 23S rRNA. It is important during the early stages of 50S assembly. It makes multiple contacts with different domains of the 23S rRNA in the assembled 50S subunit and ribosome. Its function is as follows. Forms part of the polypeptide exit tunnel. This is Large ribosomal subunit protein uL4 from Dinoroseobacter shibae (strain DSM 16493 / NCIMB 14021 / DFL 12).